The primary structure comprises 415 residues: Lipoyl synthase, mitochondrial (415 aa).

A mitochondrion-targeting transit peptide spans 1–32 (MAASTNRLRFLYSSARTVPQTGSITPISRRTY). Positions 20-32 (QTGSITPISRRTY) are enriched in polar residues. Positions 20-53 (QTGSITPISRRTYATTEPSPSATGAPATARKRTN) are disordered. Residues 33-47 (ATTEPSPSATGAPAT) show a composition bias toward low complexity. Residues Cys-132, Cys-137, Cys-143, Cys-163, Cys-167, Cys-170, and Ser-378 each coordinate [4Fe-4S] cluster. The Radical SAM core domain maps to 146–367 (GSDKSAATAT…RQRALDMGFL (222 aa)). Residues 395–415 (AAGTAGESVTDSKAAVDEATR) form a disordered region.

The protein belongs to the radical SAM superfamily. Lipoyl synthase family. The cofactor is [4Fe-4S] cluster.

The protein resides in the mitochondrion. It carries out the reaction [[Fe-S] cluster scaffold protein carrying a second [4Fe-4S](2+) cluster] + N(6)-octanoyl-L-lysyl-[protein] + 2 oxidized [2Fe-2S]-[ferredoxin] + 2 S-adenosyl-L-methionine + 4 H(+) = [[Fe-S] cluster scaffold protein] + N(6)-[(R)-dihydrolipoyl]-L-lysyl-[protein] + 4 Fe(3+) + 2 hydrogen sulfide + 2 5'-deoxyadenosine + 2 L-methionine + 2 reduced [2Fe-2S]-[ferredoxin]. The protein operates within protein modification; protein lipoylation via endogenous pathway; protein N(6)-(lipoyl)lysine from octanoyl-[acyl-carrier-protein]: step 2/2. Catalyzes the radical-mediated insertion of two sulfur atoms into the C-6 and C-8 positions of the octanoyl moiety bound to the lipoyl domains of lipoate-dependent enzymes, thereby converting the octanoylated domains into lipoylated derivatives. This chain is Lipoyl synthase, mitochondrial, found in Aspergillus flavus (strain ATCC 200026 / FGSC A1120 / IAM 13836 / NRRL 3357 / JCM 12722 / SRRC 167).